The primary structure comprises 359 residues: GDSL esterase/lipase At2g30310 (359 aa).

The first 28 residues, 1 to 28, serve as a signal peptide directing secretion; the sequence is MSTSKTIVFGLFVATLLVSCNVAANATT. S41 (nucleophile) is an active-site residue. Residues N103 and N325 are each glycosylated (N-linked (GlcNAc...) asparagine). Active-site residues include D333 and H336.

It belongs to the 'GDSL' lipolytic enzyme family.

It is found in the secreted. The polypeptide is GDSL esterase/lipase At2g30310 (Arabidopsis thaliana (Mouse-ear cress)).